The sequence spans 277 residues: Anamorsin homolog (277 aa).

The tract at residues 1–160 (MDTKRMLQNS…NIGSSFALKK (160 aa)) is N-terminal SAM-like domain. A linker region spans residues 161–188 (SIKSPVKVQNDDYSDLIDEDSLLTEEDL). [2Fe-2S] cluster is bound by residues cysteine 199, cysteine 208, cysteine 211, and cysteine 213. Positions 199 to 213 (CEVGSTRKACKNCTC) are fe-S binding site A. [4Fe-4S] cluster is bound by residues cysteine 238, cysteine 241, cysteine 249, and cysteine 252. 2 consecutive short sequence motifs (cx2C motif) follow at residues 238 to 241 (CGSC) and 249 to 252 (CGTC). Residues 238–252 (CGSCGLGDAFRCGTC) form a fe-S binding site B region.

Belongs to the anamorsin family. In terms of assembly, monomer. Requires [2Fe-2S] cluster as cofactor. [4Fe-4S] cluster is required as a cofactor.

The protein resides in the cytoplasm. Its subcellular location is the mitochondrion intermembrane space. Component of the cytosolic iron-sulfur (Fe-S) protein assembly (CIA) machinery. Required for the maturation of extramitochondrial Fe-S proteins. Part of an electron transfer chain functioning in an early step of cytosolic Fe-S biogenesis, facilitating the de novo assembly of a [4Fe-4S] cluster on the cytosolic Fe-S scaffold complex. Electrons are transferred from NADPH via a FAD- and FMN-containing diflavin oxidoreductase. Together with the diflavin oxidoreductase, also required for the assembly of the diferric tyrosyl radical cofactor of ribonucleotide reductase (RNR), probably by providing electrons for reduction during radical cofactor maturation in the catalytic small subunit. The chain is Anamorsin homolog from Populus trichocarpa (Western balsam poplar).